We begin with the raw amino-acid sequence, 731 residues long: MVVEHPEFLKAGKEPGLQIWRVEKFDLVPVPPNLYGDFFTGDAYVILKTVQLRNGNLQYDLHYWLGNECSQDESGAAAIFTVQLDDYLNGRAVQHREVQGFESATFLGYFKSGLKYKKGGVASGFKHVVPNEVVVQRLFQVKGRRVVRATEVPVSWESFNNGDCFILDLGNDIYQWCGSSSNRFERLKATQVSKGIRDNERSGRARVHVSEEGAEPEAMLEVLGPKPALPAGTEDTAKEDAANRKLAKLYKVSNGAGTMSVSLVADENPFAQGALRSEDCFILDHGKDGKIFVWKGRQANTEERKAALKTASDFISKMDYPRQTQVSVLPEGGETPLFKQFFKNWRDPDQTDGPGLSYLSSHIANVERVPFDAATLHTSTAMAAQHGMDDDGRGQKQIWRIEGSDKVPVDPATYGQFYGGDSYIILYNYRHGGRQGQIIYNWQGAQSTQDEVAASAILTAQLDEELGGTPVRSRVVQGKEPAHLMSLFGGKPMIIYRGGTSREGGQTAPASTRLFQVRASSSGATRAVEVMPKAGALNSNDAFVLKTPSAAYLWVGAGASEAEKTGALELLRVLRAQPVQVAEGSEPDSFWEALGGKAAYRTSPRLKDKKMDAHPPRLFACSNKIGRFVIEEVPGELMQEDLATDDVMLLDTWDQVFVWVGKDSQEEEKTEALTSAKRYIETDPANRDRRTPITVVKQGFEPPSFVGWFLGWDDNYWSVDPLDRALAELAA.

The interval 2–125 is actin-severing; it reads VVEHPEFLKA…YKKGGVASGF (124 aa). Residues 25–107 form a Gelsolin-like 1 repeat; that stretch reads FDLVPVPPNL…VQGFESATFL (83 aa). A Phosphotyrosine modification is found at Tyr-35. Gly-41, Asp-42, Glu-73, Asp-85, Gly-90, and Ala-92 together coordinate Ca(2+). Residues 72 to 75 form an actin-actin interfilament contact point region; it reads DESG. Residue 111 to 118 participates in a 1,2-diacyl-sn-glycero-3-phospho-(1D-myo-inositol-4,5-bisphosphate) binding; sequence KSGLKYKK. Residue Val-121 coordinates Ca(2+). 137-145 provides a ligand contact to a 1,2-diacyl-sn-glycero-3-phospho-(1D-myo-inositol-4,5-bisphosphate); sequence RLFQVKGRR. One copy of the Gelsolin-like 2 repeat lies at 147-219; that stretch reads VRATEVPVSW…SEEGAEPEAM (73 aa). The Ca(2+) site is built by Gly-162 and Asp-163. A disulfide bridge connects residues Cys-164 and Cys-177. Glu-185 contacts Ca(2+). Residues 197–211 show a composition bias toward basic and acidic residues; sequence RDNERSGRARVHVSE. Residues 197–216 are disordered; the sequence is RDNERSGRARVHVSEEGAEP. Asp-235, Glu-278, Asp-279, and Glu-303 together coordinate Ca(2+). The stretch at 266–338 is one Gelsolin-like 3 repeat; that stretch reads DENPFAQGAL…LPEGGETPLF (73 aa). Tyr-358 and Tyr-414 each carry phosphotyrosine. Residues 383-731 form an actin-binding, Ca-sensitive region; the sequence is AAQHGMDDDG…LDRALAELAA (349 aa). The Gelsolin-like 4 repeat unit spans residues 404-485; the sequence is SDKVPVDPAT…VQGKEPAHLM (82 aa). Gly-420, Asp-421, Glu-451, Asp-463, Gly-468, Pro-470, and Thr-500 together coordinate Ca(2+). A Gelsolin-like 5 repeat occupies 527–591; the sequence is AVEVMPKAGA…AEGSEPDSFW (65 aa). The residue at position 533 (Lys-533) is an N6-acetyllysine. Residues Asn-540 and Asp-541 each contribute to the Ca(2+) site. Tyr-552 is subject to Phosphotyrosine. Glu-563 contributes to the Ca(2+) binding site. Phosphotyrosine is present on Tyr-600. The Gelsolin-like 6 repeat unit spans residues 630 to 705; the sequence is IEEVPGELMQ…VKQGFEPPSF (76 aa). Positions 645, 646, and 668 each coordinate Ca(2+). Thr-691 is subject to Phosphothreonine.

Belongs to the villin/gelsolin family. As to quaternary structure, binds to actin and to fibronectin. Identified in a complex composed of ACTA1, COBL, GSN and TMSB4X. Interacts with the inactive form of EIF2AK2/PKR. Interacts with FLII.

The protein resides in the cytoplasm. The protein localises to the cytoskeleton. In terms of biological role, calcium-regulated, actin-modulating protein that binds to the plus (or barbed) ends of actin monomers or filaments, preventing monomer exchange (end-blocking or capping). It can promote the assembly of monomers into filaments (nucleation) as well as sever filaments already formed. Plays a role in ciliogenesis. The sequence is that of Gelsolin (GSN) from Bos taurus (Bovine).